Consider the following 509-residue polypeptide: Nucleoprotein (509 aa).

The ncore stretch occupies residues 1–404 (MSSVLKAYER…ANTLAKLTTA (404 aa)). 5 residues coordinate RNA: Lys-180, Arg-195, Tyr-260, Tyr-350, and Arg-354. The tract at residues 405 to 509 (NRGADTRGGV…LNAALGDLDI (105 aa)) is ntail. Residues 452 to 477 (GTHDDEMPPLEEEEEDDTSAGPRTGP) form a disordered region. The segment covering 458-469 (MPPLEEEEEDDT) has biased composition (acidic residues).

This sequence belongs to the paramyxoviruses nucleocapsid family. In terms of assembly, homomultimer; forms the nucleocapsid. Binds to the viral genomic RNA. N0 interacts with the phosphoprotein (via N-terminus); this interaction allows P to chaperon N0 to avoid N polymerization before encapsidation. Interacts as N-RNA template with the phosphoprotein (via C-terminus); this interaction positions the polymerase on the template.

Its subcellular location is the virion. The protein resides in the host cytoplasm. Forms the helical nucleocapsid (NC), protecting the genome from nucleases. The encapsidated genomic RNA serves as template for transcription and replication; encapsidation by N is coupled to RNA synthesis. Forms the encapsidation complex with the phosphoprotein protein P. Before encapsidation, the newly synthesized free N protein, so-called N0, is chaperoned by P. This chain is Nucleoprotein (NP), found in Canis lupus familiaris (Dog).